A 359-amino-acid chain; its full sequence is Transcription elongation factor A N-terminal and central domain-containing protein (359 aa).

The TFIIS N-terminal domain maps to 1–82 (MSDKNQIIAR…AKWRGFYKST (82 aa)). The segment at 84–118 (CKPRQSPKVLHTNANKEESAAVSQDVSQDETSGSS) is disordered. The span at 104-118 (AVSQDVSQDETSGSS) shows a compositional bias: polar residues. In terms of domain architecture, TFIIS central spans 182 to 298 (VRSKCVELLY…EHCLPQSVDG (117 aa)).

This Mus musculus (Mouse) protein is Transcription elongation factor A N-terminal and central domain-containing protein (Tceanc).